Consider the following 347-residue polypeptide: GMP reductase (347 aa).

Residue 108 to 131 (ADFQKTKDIMAISDEFIFICIDIA) coordinates NADP(+). Residues Gly181 and Gly183 each coordinate K(+). Cys186 (thioimidate intermediate) is an active-site residue. An NADP(+)-binding site is contributed by 216–239 (IIGDGGCSCAGDVAKAFGGGADFV).

This sequence belongs to the IMPDH/GMPR family. GuaC type 1 subfamily. As to quaternary structure, homotetramer.

It carries out the reaction IMP + NH4(+) + NADP(+) = GMP + NADPH + 2 H(+). Functionally, catalyzes the irreversible NADPH-dependent deamination of GMP to IMP. It functions in the conversion of nucleobase, nucleoside and nucleotide derivatives of G to A nucleotides, and in maintaining the intracellular balance of A and G nucleotides. The polypeptide is GMP reductase (Vibrio campbellii (strain ATCC BAA-1116)).